The following is a 622-amino-acid chain: Low affinity potassium transport system protein Kup (622 aa).

12 helical membrane passes run Leu9–Leu29, Pro46–Val66, Ile101–Pro121, Pro137–Ile157, Val165–Leu185, Val213–Ala233, Trp247–Leu267, Pro276–Ala296, Ile337–Phe357, Leu363–Cys383, Phe395–Asn415, and Val416–Ile436.

It belongs to the HAK/KUP transporter (TC 2.A.72) family.

Its subcellular location is the cell inner membrane. The enzyme catalyses K(+)(in) + H(+)(in) = K(+)(out) + H(+)(out). Its function is as follows. Responsible for the low-affinity transport of potassium into the cell. Likely operates as a K(+):H(+) symporter. The sequence is that of Low affinity potassium transport system protein Kup from Yersinia pseudotuberculosis serotype O:1b (strain IP 31758).